Reading from the N-terminus, the 117-residue chain is MITLFLILCYFILIFNIIVPAISEKMRRERAAYVNYKRLNKNFICVDDRLFSYNFTTSGIKAKVAVDNKNVPIPCSEINEVNNNKDVDTLYCDKDRDDIPGFTRSCYRAYSDLFFTT.

Residues 1–21 form a helical; Signal-anchor for type III membrane protein membrane-spanning segment; that stretch reads MITLFLILCYFILIFNIIVPA. Topologically, residues 22–117 are virion surface; it reads ISEKMRRERA…RAYSDLFFTT (96 aa).

It belongs to the orthopoxvirus OPG147 family. As to quaternary structure, part of a stable entry-fusion complex (EFC) which is at least composed of proteins OPG143, OPG147, OPG155, OPG086, OPG094, OPG107, OPG104, and OPG099. Formation of the viral membrane is necessary for the assembly of the complex. Contains two intramolecular disulfide bonds. They are created by the viral disulfide bond formation pathway, a poxvirus-specific pathway that operates on the cytoplasmic side of the MV membranes.

It is found in the virion membrane. In terms of biological role, envelope protein part of the entry-fusion complex responsible for the virus membrane fusion with host cell membrane during virus entry. Also plays a role in cell-cell fusion (syncytium formation). The sequence is that of Virion membrane protein OPG147 (OPG147) from Homo sapiens (Human).